The sequence spans 153 residues: Ribosomal RNA large subunit methyltransferase H (153 aa).

S-adenosyl-L-methionine is bound by residues leucine 63, glycine 102, and 121–126 (FGKITL).

This sequence belongs to the RNA methyltransferase RlmH family. Homodimer.

It localises to the cytoplasm. The enzyme catalyses pseudouridine(1915) in 23S rRNA + S-adenosyl-L-methionine = N(3)-methylpseudouridine(1915) in 23S rRNA + S-adenosyl-L-homocysteine + H(+). Its function is as follows. Specifically methylates the pseudouridine at position 1915 (m3Psi1915) in 23S rRNA. This is Ribosomal RNA large subunit methyltransferase H from Sulfurovum sp. (strain NBC37-1).